Here is a 354-residue protein sequence, read N- to C-terminus: Biotin synthase (354 aa).

The Radical SAM core domain maps to 41 to 268 (NEVQISRLLS…LSRVRLSAGR (228 aa)). 3 residues coordinate [4Fe-4S] cluster: cysteine 56, cysteine 60, and cysteine 63. [2Fe-2S] cluster contacts are provided by cysteine 100, cysteine 131, cysteine 191, and arginine 263.

This sequence belongs to the radical SAM superfamily. Biotin synthase family. As to quaternary structure, homodimer. The cofactor is [4Fe-4S] cluster. It depends on [2Fe-2S] cluster as a cofactor.

It catalyses the reaction (4R,5S)-dethiobiotin + (sulfur carrier)-SH + 2 reduced [2Fe-2S]-[ferredoxin] + 2 S-adenosyl-L-methionine = (sulfur carrier)-H + biotin + 2 5'-deoxyadenosine + 2 L-methionine + 2 oxidized [2Fe-2S]-[ferredoxin]. Its pathway is cofactor biosynthesis; biotin biosynthesis; biotin from 7,8-diaminononanoate: step 2/2. Its function is as follows. Catalyzes the conversion of dethiobiotin (DTB) to biotin by the insertion of a sulfur atom into dethiobiotin via a radical-based mechanism. The chain is Biotin synthase from Shewanella amazonensis (strain ATCC BAA-1098 / SB2B).